A 247-amino-acid chain; its full sequence is Cell division protein ZapD (247 aa).

The protein belongs to the ZapD family. In terms of assembly, interacts with FtsZ.

It is found in the cytoplasm. Its function is as follows. Cell division factor that enhances FtsZ-ring assembly. Directly interacts with FtsZ and promotes bundling of FtsZ protofilaments, with a reduction in FtsZ GTPase activity. This chain is Cell division protein ZapD, found in Salmonella choleraesuis (strain SC-B67).